Reading from the N-terminus, the 142-residue chain is Large ribosomal subunit protein uL13 (142 aa).

The protein belongs to the universal ribosomal protein uL13 family. In terms of assembly, part of the 50S ribosomal subunit.

Functionally, this protein is one of the early assembly proteins of the 50S ribosomal subunit, although it is not seen to bind rRNA by itself. It is important during the early stages of 50S assembly. This chain is Large ribosomal subunit protein uL13, found in Agathobacter rectalis (strain ATCC 33656 / DSM 3377 / JCM 17463 / KCTC 5835 / VPI 0990) (Eubacterium rectale).